Here is a 304-residue protein sequence, read N- to C-terminus: Cyclin-dependent kinase 3 (304 aa).

One can recognise a Protein kinase domain in the interval 4–286 (FQKVEKIGEG…AKTALAHPYF (283 aa)). Residues 10–18 (IGEGTYGVV) and Lys33 contribute to the ATP site. Asp127 functions as the Proton acceptor in the catalytic mechanism.

The protein belongs to the protein kinase superfamily. CMGC Ser/Thr protein kinase family. CDC2/CDKX subfamily. Interacts with CABLES1 and ATF1. Binding to CCNC/cyclin-C promotes RB1 phosphorylation. Binds to CABLES2.

The enzyme catalyses L-seryl-[protein] + ATP = O-phospho-L-seryl-[protein] + ADP + H(+). It catalyses the reaction L-threonyl-[protein] + ATP = O-phospho-L-threonyl-[protein] + ADP + H(+). Its function is as follows. Serine/threonine-protein kinase that plays a critical role in the control of the eukaryotic cell cycle; involved in G0-G1 and G1-S cell cycle transitions. Interacts with CCNC/cyclin-C during interphase. Phosphorylates histone H1, ATF1, RB1 and CABLES1. ATF1 phosphorylation triggers ATF1 transactivation and transcriptional activities, and promotes cell proliferation and transformation. CDK3/cyclin-C mediated RB1 phosphorylation is required for G0-G1 transition. Promotes G1-S transition probably by contributing to the activation of E2F1, E2F2 and E2F3 in a RB1-independent manner. The protein is Cyclin-dependent kinase 3 (Cdk3) of Mus musculus (Mouse).